A 142-amino-acid polypeptide reads, in one-letter code: MKTFMLKKNIARQNWHIFDAKNKILGRFSTKLASILKGKNDITYTPHVDSGNYVIVINSKKIKITGKKLKNKFYYHHTGYSGGIKKISLENMIKNNSELVIYKSVKGMLPKGSLGRVMIKKLKIFSGESHNHEAQKPKKLLT.

This sequence belongs to the universal ribosomal protein uL13 family. Part of the 50S ribosomal subunit.

Its function is as follows. This protein is one of the early assembly proteins of the 50S ribosomal subunit, although it is not seen to bind rRNA by itself. It is important during the early stages of 50S assembly. The chain is Large ribosomal subunit protein uL13 from Wigglesworthia glossinidia brevipalpis.